Here is a 374-residue protein sequence, read N- to C-terminus: MKFELDTTDGRARRGRLIFERGTVETPAFMPVGTYGTVKGMTPEEVRATGADILLGNTFHLWLRPGEEIMRKHGDLHDFMNWQRPILTDSGGFQVFSLGDIRKITEEGVHFRSPINGEKIFLDPEKSMQIQHALGSDVVMIFDECTPYPATEDEARKSMQMSLRWAKRSRDEFDRLENPNSLFGIIQGSVYEDLRDESLKGLVEIGFDGYAVGGLAVGEPKEDMHRILEHVCPQIPADKPRYLMGVGKPEDLVEGVRRGIDMFDCVMPTRNARNGHLFTSEGVIKIRNARHRDDTSPLDPKCDCYTCKNYSRAYLYHLDRCNEILGARLNTIHNLRYYQMLMEGLRGAIETGTLDAFVKDFYTSQGREVPELVD.

Catalysis depends on D89, which acts as the Proton acceptor. Residues 89–93 (DSGGF), D143, Q187, and G214 each bind substrate. The segment at 245 to 251 (GVGKPED) is RNA binding. D264 (nucleophile) is an active-site residue. The tract at residues 269–273 (TRNAR) is RNA binding; important for wobble base 34 recognition. Residues C302, C304, C307, and H333 each contribute to the Zn(2+) site.

The protein belongs to the queuine tRNA-ribosyltransferase family. As to quaternary structure, homodimer. Within each dimer, one monomer is responsible for RNA recognition and catalysis, while the other monomer binds to the replacement base PreQ1. It depends on Zn(2+) as a cofactor.

The catalysed reaction is 7-aminomethyl-7-carbaguanine + guanosine(34) in tRNA = 7-aminomethyl-7-carbaguanosine(34) in tRNA + guanine. Its pathway is tRNA modification; tRNA-queuosine biosynthesis. Catalyzes the base-exchange of a guanine (G) residue with the queuine precursor 7-aminomethyl-7-deazaguanine (PreQ1) at position 34 (anticodon wobble position) in tRNAs with GU(N) anticodons (tRNA-Asp, -Asn, -His and -Tyr). Catalysis occurs through a double-displacement mechanism. The nucleophile active site attacks the C1' of nucleotide 34 to detach the guanine base from the RNA, forming a covalent enzyme-RNA intermediate. The proton acceptor active site deprotonates the incoming PreQ1, allowing a nucleophilic attack on the C1' of the ribose to form the product. After dissociation, two additional enzymatic reactions on the tRNA convert PreQ1 to queuine (Q), resulting in the hypermodified nucleoside queuosine (7-(((4,5-cis-dihydroxy-2-cyclopenten-1-yl)amino)methyl)-7-deazaguanosine). This chain is Queuine tRNA-ribosyltransferase, found in Shewanella sp. (strain MR-4).